The chain runs to 345 residues: RNA polymerase II holoenzyme cyclin-like subunit (345 aa).

In terms of domain architecture, Cyclin N-terminal spans 23 to 147; sequence ESRRKLLLLE…KLAEFEFYLI (125 aa).

This sequence belongs to the cyclin family. Cyclin C subfamily. In terms of assembly, component of the SRB8-11 complex, a regulatory module of the Mediator complex.

It localises to the nucleus. Component of the SRB8-11 complex. The SRB8-11 complex is a regulatory module of the Mediator complex which is itself involved in regulation of basal and activated RNA polymerase II-dependent transcription. The SRB8-11 complex may be involved in the transcriptional repression of a subset of genes regulated by Mediator. It may inhibit the association of the Mediator complex with RNA polymerase II to form the holoenzyme complex. The SRB8-11 complex phosphorylates the C-terminal domain (CTD) of the largest subunit of RNA polymerase II. This is RNA polymerase II holoenzyme cyclin-like subunit (SSN8) from Debaryomyces hansenii (strain ATCC 36239 / CBS 767 / BCRC 21394 / JCM 1990 / NBRC 0083 / IGC 2968) (Yeast).